Here is a 276-residue protein sequence, read N- to C-terminus: Large ribosomal subunit protein uL2 (276 aa).

Disordered stretches follow at residues glutamine 37 to lysine 59 and valine 224 to arginine 276. The span at threonine 50–lysine 59 shows a compositional bias: basic residues.

It belongs to the universal ribosomal protein uL2 family. As to quaternary structure, part of the 50S ribosomal subunit. Forms a bridge to the 30S subunit in the 70S ribosome.

Its function is as follows. One of the primary rRNA binding proteins. Required for association of the 30S and 50S subunits to form the 70S ribosome, for tRNA binding and peptide bond formation. It has been suggested to have peptidyltransferase activity; this is somewhat controversial. Makes several contacts with the 16S rRNA in the 70S ribosome. This Ralstonia nicotianae (strain ATCC BAA-1114 / GMI1000) (Ralstonia solanacearum) protein is Large ribosomal subunit protein uL2.